Reading from the N-terminus, the 238-residue chain is Protein FEV (238 aa).

Positions 47–127 (IQLWQFLLEL…HGKRYAYRFD (81 aa)) form a DNA-binding region, ETS. A may mediate active transcriptional repression region spans residues 129–238 (QGLAQACQPP…AASHLGGHYH (110 aa)).

This sequence belongs to the ETS family. In brain, exclusively expressed in the major serotonergic neurons of the dorsal and median raphe nuclei located in the midbrain and pons. Also detected in prostate and small intestine.

The protein localises to the nucleus. Functionally, functions as a transcriptional regulator. According to PubMed:12761502, it functions as a transcriptional repressor. Functions in the differentiation and the maintenance of the central serotonergic neurons. May play a role in cell growth. This Homo sapiens (Human) protein is Protein FEV (FEV).